Consider the following 235-residue polypeptide: 2-C-methyl-D-erythritol 4-phosphate cytidylyltransferase (235 aa).

The protein belongs to the IspD/TarI cytidylyltransferase family. IspD subfamily.

It catalyses the reaction 2-C-methyl-D-erythritol 4-phosphate + CTP + H(+) = 4-CDP-2-C-methyl-D-erythritol + diphosphate. It functions in the pathway isoprenoid biosynthesis; isopentenyl diphosphate biosynthesis via DXP pathway; isopentenyl diphosphate from 1-deoxy-D-xylulose 5-phosphate: step 2/6. Functionally, catalyzes the formation of 4-diphosphocytidyl-2-C-methyl-D-erythritol from CTP and 2-C-methyl-D-erythritol 4-phosphate (MEP). The polypeptide is 2-C-methyl-D-erythritol 4-phosphate cytidylyltransferase (Pseudomonas fluorescens (strain Pf0-1)).